A 404-amino-acid chain; its full sequence is S-adenosylmethionine synthase (404 aa).

An ATP-binding site is contributed by H17. D19 provides a ligand contact to Mg(2+). Residue E45 coordinates K(+). Residues E58 and Q101 each coordinate L-methionine. Residues 101-111 are flexible loop; the sequence is QSPDINRGVDR. Residues 172–174, 246–247, D255, 261–262, A278, and K282 contribute to the ATP site; these read DAK, RF, and RK. D255 lines the L-methionine pocket. K286 lines the L-methionine pocket.

This sequence belongs to the AdoMet synthase family. In terms of assembly, homotetramer; dimer of dimers. Mg(2+) serves as cofactor. K(+) is required as a cofactor.

The protein resides in the cytoplasm. The catalysed reaction is L-methionine + ATP + H2O = S-adenosyl-L-methionine + phosphate + diphosphate. The protein operates within amino-acid biosynthesis; S-adenosyl-L-methionine biosynthesis; S-adenosyl-L-methionine from L-methionine: step 1/1. In terms of biological role, catalyzes the formation of S-adenosylmethionine (AdoMet) from methionine and ATP. The overall synthetic reaction is composed of two sequential steps, AdoMet formation and the subsequent tripolyphosphate hydrolysis which occurs prior to release of AdoMet from the enzyme. The polypeptide is S-adenosylmethionine synthase (Chlorobaculum tepidum (strain ATCC 49652 / DSM 12025 / NBRC 103806 / TLS) (Chlorobium tepidum)).